A 748-amino-acid chain; its full sequence is Malate synthase G (748 aa).

Acetyl-CoA is bound by residues V141, 148–149 (RF), S298, and R335. The active-site Proton acceptor is the R362. Residues R362, E453, and 478–481 (GFLD) contribute to the glyoxylate site. The Mg(2+) site is built by E453 and D481. Residue P562 participates in acetyl-CoA binding. The residue at position 639 (C639) is a Cysteine sulfenic acid (-SOH). D653 functions as the Proton donor in the catalytic mechanism.

It belongs to the malate synthase family. GlcB subfamily. Monomer. Mg(2+) serves as cofactor.

Its subcellular location is the cytoplasm. It catalyses the reaction glyoxylate + acetyl-CoA + H2O = (S)-malate + CoA + H(+). Its pathway is carbohydrate metabolism; glyoxylate cycle; (S)-malate from isocitrate: step 2/2. Involved in the glycolate utilization. Catalyzes the condensation and subsequent hydrolysis of acetyl-coenzyme A (acetyl-CoA) and glyoxylate to form malate and CoA. This is Malate synthase G from Corynebacterium efficiens (strain DSM 44549 / YS-314 / AJ 12310 / JCM 11189 / NBRC 100395).